A 310-amino-acid chain; its full sequence is Homocysteine S-methyltransferase (310 aa).

The Hcy-binding domain occupies 1–310; that stretch reads MSQNNPLRAL…ADIAALKARS (310 aa). Zn(2+) is bound by residues C229, C295, and C296.

Monomer. It depends on Zn(2+) as a cofactor.

The enzyme catalyses S-methyl-L-methionine + L-homocysteine = 2 L-methionine + H(+). Its function is as follows. Catalyzes methyl transfer from S-methylmethionine or S-adenosylmethionine (less efficient) to homocysteine, selenohomocysteine and less efficiently selenocysteine. This chain is Homocysteine S-methyltransferase (mmuM), found in Escherichia coli (strain K12).